We begin with the raw amino-acid sequence, 111 residues long: NADH-ubiquinone oxidoreductase chain 3 (111 aa).

3 helical membrane-spanning segments follow: residues 2 to 22 (ILIWLSIFMLVFIMLTLGMFV), 54 to 74 (FFVITLIFLIFDVEIYLLLPM), and 82 to 102 (PTTYLIIFFTFILVAGVFYEW).

It belongs to the complex I subunit 3 family.

It localises to the mitochondrion membrane. The catalysed reaction is a ubiquinone + NADH + 5 H(+)(in) = a ubiquinol + NAD(+) + 4 H(+)(out). Functionally, core subunit of the mitochondrial membrane respiratory chain NADH dehydrogenase (Complex I) that is believed to belong to the minimal assembly required for catalysis. Complex I functions in the transfer of electrons from NADH to the respiratory chain. The immediate electron acceptor for the enzyme is believed to be ubiquinone. This chain is NADH-ubiquinone oxidoreductase chain 3 (ND3), found in Artemia franciscana (Brine shrimp).